Here is a 451-residue protein sequence, read N- to C-terminus: Zinc finger MYND domain-containing protein 10 homolog (451 aa).

Residues cysteine 412, cysteine 415, cysteine 423, cysteine 426, cysteine 432, cysteine 436, histidine 444, and cysteine 448 each coordinate Zn(2+). Residues 412 to 448 (CATCQAKAKKKCACCKKVHYCSRDCQLKDWPQHKLVC) form an MYND-type zinc finger.

It belongs to the ZMYND10 family. As to expression, specifically expressed in cells with flagella and motile cilia: chordotonal sensory neurons and sperm.

The protein localises to the cytoplasm. The protein resides in the cell projection. It localises to the cilium. It is found in the dynein axonemal particle. Functionally, plays a role in axonemal structure organization and motility. May be involved in axonemal pre-assembly of inner and outer dynein arms (IDA and ODA, respectively) for proper axoneme building for cilia motility. The polypeptide is Zinc finger MYND domain-containing protein 10 homolog (Drosophila melanogaster (Fruit fly)).